Reading from the N-terminus, the 248-residue chain is Probable transcriptional regulatory protein PHZ_c3068 (248 aa).

It belongs to the TACO1 family.

Its subcellular location is the cytoplasm. The protein is Probable transcriptional regulatory protein PHZ_c3068 of Phenylobacterium zucineum (strain HLK1).